The following is a 459-amino-acid chain: Protein U54 (459 aa).

An N-terminal signal peptide occupies residues 1-20 (MQPATLQWSSYVLQLRLTTA). N-linked (GlcNAc...) asparagine; by host glycans are attached at residues Asn76, Asn100, Asn281, Asn321, and Asn452.

Belongs to the herpesviridae UL82 family.

In Homo sapiens (Human), this protein is Protein U54 (U54).